Consider the following 757-residue polypeptide: RNA-directed RNA polymerase catalytic subunit (757 aa).

Positions 56–78 (TTNTETGAHQLNPIDGPLPEDNE) are disordered. Short sequence motifs (nuclear localization signal) lie at residues 187 to 195 (RKRRVRDNM) and 203 to 216 (RTIG…NKRS). A promoter-binding site region spans residues 249 to 256 (RGFVYFVE). Positions 286 to 483 (VRKMMTNSQD…GINMSKKKSY (198 aa)) constitute a RdRp catalytic domain.

This sequence belongs to the influenza viruses polymerase PB1 family. In terms of assembly, influenza RNA polymerase is composed of three subunits: PB1, PB2 and PA. Interacts (via N-terminus) with PA (via C-terminus). Interacts (via C-terminus) with PB2 (via N-terminus); this interaction is essential for transcription initiation. Phosphorylated by host PRKCA.

It localises to the host nucleus. It is found in the host cytoplasm. It catalyses the reaction RNA(n) + a ribonucleoside 5'-triphosphate = RNA(n+1) + diphosphate. In terms of biological role, RNA-dependent RNA polymerase which is responsible for replication and transcription of virus RNA segments. The transcription of viral mRNAs occurs by a unique mechanism called cap-snatching. 5' methylated caps of cellular mRNAs are cleaved after 10-13 nucleotides by PA. In turn, these short capped RNAs are used as primers by PB1 for transcription of viral mRNAs. During virus replication, PB1 initiates RNA synthesis and copy vRNA into complementary RNA (cRNA) which in turn serves as a template for the production of more vRNAs. This chain is RNA-directed RNA polymerase catalytic subunit, found in Aves (Human).